Consider the following 703-residue polypeptide: tRNA 5-methylaminomethyl-2-thiouridine biosynthesis bifunctional protein MnmC (703 aa).

A tRNA (mnm(5)s(2)U34)-methyltransferase region spans residues 1–281 (MTAKPQKSCQ…KPAALVAKDH (281 aa)). The tract at residues 286 to 703 (VGGGLASANL…LRKLLKGKAL (418 aa)) is FAD-dependent cmnm(5)s(2)U34 oxidoreductase.

The protein in the N-terminal section; belongs to the methyltransferase superfamily. tRNA (mnm(5)s(2)U34)-methyltransferase family. In the C-terminal section; belongs to the DAO family. FAD serves as cofactor.

Its subcellular location is the cytoplasm. It carries out the reaction 5-aminomethyl-2-thiouridine(34) in tRNA + S-adenosyl-L-methionine = 5-methylaminomethyl-2-thiouridine(34) in tRNA + S-adenosyl-L-homocysteine + H(+). Catalyzes the last two steps in the biosynthesis of 5-methylaminomethyl-2-thiouridine (mnm(5)s(2)U) at the wobble position (U34) in tRNA. Catalyzes the FAD-dependent demodification of cmnm(5)s(2)U34 to nm(5)s(2)U34, followed by the transfer of a methyl group from S-adenosyl-L-methionine to nm(5)s(2)U34, to form mnm(5)s(2)U34. This Shewanella sp. (strain MR-7) protein is tRNA 5-methylaminomethyl-2-thiouridine biosynthesis bifunctional protein MnmC.